Reading from the N-terminus, the 786-residue chain is Exo-beta-D-glucosaminidase (786 aa).

Residues Tyr53, 102 to 103 (GE), 178 to 179 (DE), Glu306, Glu347, and Tyr379 each bind substrate. The active-site Proton donor is the Glu179. Glu347 functions as the Nucleophile in the catalytic mechanism.

Belongs to the glycosyl hydrolase 35 family. As to quaternary structure, homodimer.

It is found in the cytoplasm. It carries out the reaction beta-D-glucosaminyl-(1-&gt;4)-N-acetyl-D-glucosamine + H2O = D-glucosamine + N-acetyl-D-glucosamine. It functions in the pathway glycan degradation; chitin degradation. Its function is as follows. Exo-type enzyme that specifically cleaves the non-reducing terminal glycosidic bond of chitooligosaccharides. Catalyzes the hydrolysis of GlcN-GlcNAc to glucosamine (GlcN) and N-acetylglucosamine (GlcNAc). Involved in chitin degradation. Can also hydrolyze reduced chitobiose (GlcN2OH) and chitooligosaccharides of various chain lengths. In Thermococcus kodakarensis (strain ATCC BAA-918 / JCM 12380 / KOD1) (Pyrococcus kodakaraensis (strain KOD1)), this protein is Exo-beta-D-glucosaminidase.